The primary structure comprises 296 residues: Fructose-bisphosphate aldolase class 1 (296 aa).

Catalysis depends on E175, which acts as the Proton acceptor. The active-site Schiff-base intermediate with dihydroxyacetone-P is K212.

This sequence belongs to the class I fructose-bisphosphate aldolase family.

The enzyme catalyses beta-D-fructose 1,6-bisphosphate = D-glyceraldehyde 3-phosphate + dihydroxyacetone phosphate. The protein operates within carbohydrate degradation; glycolysis; D-glyceraldehyde 3-phosphate and glycerone phosphate from D-glucose: step 4/4. The polypeptide is Fructose-bisphosphate aldolase class 1 (fda) (Staphylococcus carnosus (strain TM300)).